A 485-amino-acid chain; its full sequence is Peroxisomal catalase (485 aa).

Catalysis depends on residues His-53 and Asn-126. Residue Tyr-336 participates in heme binding.

The protein belongs to the catalase family. Homotetramer. It depends on heme as a cofactor.

It localises to the peroxisome matrix. The enzyme catalyses 2 H2O2 = O2 + 2 H2O. Functionally, catalyzes the degradation of hydrogen peroxide (H(2)O(2)) generated by peroxisomal oxidases to water and oxygen, thereby protecting cells from the toxic effects of hydrogen peroxide. This Candida albicans (strain SC5314 / ATCC MYA-2876) (Yeast) protein is Peroxisomal catalase (CAT1).